The primary structure comprises 240 residues: Ribonuclease HII (240 aa).

An RNase H type-2 domain is found at 21–210 (GLVAGVDEAG…VAAAVQRTVV (190 aa)). Positions 27, 28, and 119 each coordinate a divalent metal cation.

Belongs to the RNase HII family. Mn(2+) is required as a cofactor. Mg(2+) serves as cofactor.

The protein localises to the cytoplasm. It catalyses the reaction Endonucleolytic cleavage to 5'-phosphomonoester.. Endonuclease that specifically degrades the RNA of RNA-DNA hybrids. The chain is Ribonuclease HII from Paracidovorax citrulli (strain AAC00-1) (Acidovorax citrulli).